The sequence spans 297 residues: Tyrosine recombinase XerD (297 aa).

The Core-binding (CB) domain maps to 1–86 (MKDSALIELF…AMRKLFQYLY (86 aa)). In terms of domain architecture, Tyr recombinase spans 107–291 (RLPKYLTEQQ…AKERLKHLHE (185 aa)). Active-site residues include arginine 147, lysine 171, histidine 243, arginine 246, and histidine 269. The active-site O-(3'-phospho-DNA)-tyrosine intermediate is the tyrosine 278.

Belongs to the 'phage' integrase family. XerD subfamily. As to quaternary structure, forms a cyclic heterotetrameric complex composed of two molecules of XerC and two molecules of XerD.

It is found in the cytoplasm. Functionally, site-specific tyrosine recombinase, which acts by catalyzing the cutting and rejoining of the recombining DNA molecules. The XerC-XerD complex is essential to convert dimers of the bacterial chromosome into monomers to permit their segregation at cell division. It also contributes to the segregational stability of plasmids. In Pasteurella multocida (strain Pm70), this protein is Tyrosine recombinase XerD.